We begin with the raw amino-acid sequence, 424 residues long: CinA-like protein (424 aa).

This sequence belongs to the CinA family.

The chain is CinA-like protein from Prochlorococcus marinus (strain MIT 9215).